Consider the following 429-residue polypeptide: Probable M18 family aminopeptidase 2 (429 aa).

Positions 82, 156, and 401 each coordinate Zn(2+).

This sequence belongs to the peptidase M18 family. The cofactor is Zn(2+).

The protein is Probable M18 family aminopeptidase 2 of Pseudomonas putida (strain ATCC 47054 / DSM 6125 / CFBP 8728 / NCIMB 11950 / KT2440).